We begin with the raw amino-acid sequence, 329 residues long: Ubiquitin carboxyl-terminal hydrolase isozyme L5 (329 aa).

Residues 7–225 (EWCLMESDPG…IRFNLMAIVS (219 aa)) form the UCH catalytic domain. Lys47 bears the N6-succinyllysine mark. Cys88 functions as the Nucleophile in the catalytic mechanism. At Lys158 the chain carries N6-acetyllysine. His164 acts as the Proton donor in catalysis. Lys289 carries the post-translational modification N6-succinyllysine. Residues 291–319 (NYLPFIMELLKTLAEHQQLIPLVEKAKEK) form the ULD domain. The interaction with ADRM1 stretch occupies residues 313-329 (VEKAKEKQNAKKAQETK).

It belongs to the peptidase C12 family. Component of the 19S (PA700) regulatory complex of the 26S proteasome. Interacts with ADRM1 and NFRKB. Component of the INO80 complex; specifically part of a complex module associated with N-terminus of INO80.

It localises to the cytoplasm. The protein resides in the nucleus. The enzyme catalyses Thiol-dependent hydrolysis of ester, thioester, amide, peptide and isopeptide bonds formed by the C-terminal Gly of ubiquitin (a 76-residue protein attached to proteins as an intracellular targeting signal).. With respect to regulation, activated by ADRM1. Inhibited by interaction with NFRKB. Its function is as follows. Protease that specifically cleaves 'Lys-48'-linked polyubiquitin chains. Deubiquitinating enzyme associated with the 19S regulatory subunit of the 26S proteasome. Putative regulatory component of the INO80 complex; however is inactive in the INO80 complex and is activated by a transient interaction of the INO80 complex with the proteasome via ADRM1. The polypeptide is Ubiquitin carboxyl-terminal hydrolase isozyme L5 (UCHL5) (Sus scrofa (Pig)).